The chain runs to 158 residues: NAD(P)H-quinone oxidoreductase subunit J, chloroplastic (158 aa).

It belongs to the complex I 30 kDa subunit family. As to quaternary structure, NDH is composed of at least 16 different subunits, 5 of which are encoded in the nucleus.

It localises to the plastid. The protein localises to the chloroplast thylakoid membrane. The enzyme catalyses a plastoquinone + NADH + (n+1) H(+)(in) = a plastoquinol + NAD(+) + n H(+)(out). It carries out the reaction a plastoquinone + NADPH + (n+1) H(+)(in) = a plastoquinol + NADP(+) + n H(+)(out). Its function is as follows. NDH shuttles electrons from NAD(P)H:plastoquinone, via FMN and iron-sulfur (Fe-S) centers, to quinones in the photosynthetic chain and possibly in a chloroplast respiratory chain. The immediate electron acceptor for the enzyme in this species is believed to be plastoquinone. Couples the redox reaction to proton translocation, and thus conserves the redox energy in a proton gradient. In Dioscorea elephantipes (Elephant's foot yam), this protein is NAD(P)H-quinone oxidoreductase subunit J, chloroplastic.